Here is a 149-residue protein sequence, read N- to C-terminus: Transcriptional repressor NrdR (149 aa).

A zinc finger spans residues 3-34 (CPFCSAVDTKVIDSRLVGEGSQVRRRRQCLVC). One can recognise an ATP-cone domain in the interval 49–139 (PRVIKSNEVR…VYRSFEDIRE (91 aa)).

Belongs to the NrdR family. Zn(2+) is required as a cofactor.

Its function is as follows. Negatively regulates transcription of bacterial ribonucleotide reductase nrd genes and operons by binding to NrdR-boxes. The polypeptide is Transcriptional repressor NrdR (Pectobacterium atrosepticum (strain SCRI 1043 / ATCC BAA-672) (Erwinia carotovora subsp. atroseptica)).